The chain runs to 425 residues: UPF0597 protein VFMJ11_0655 (425 aa).

Belongs to the UPF0597 family.

The polypeptide is UPF0597 protein VFMJ11_0655 (Aliivibrio fischeri (strain MJ11) (Vibrio fischeri)).